The chain runs to 145 residues: Deoxyuridine 5'-triphosphate nucleotidohydrolase (145 aa).

Residues 63 to 65, Gln76, and 80 to 82 contribute to the substrate site; these read RSG and TVD.

It belongs to the dUTPase family. Requires Mg(2+) as cofactor.

It carries out the reaction dUTP + H2O = dUMP + diphosphate + H(+). The protein operates within pyrimidine metabolism; dUMP biosynthesis; dUMP from dCTP (dUTP route): step 2/2. Functionally, this enzyme is involved in nucleotide metabolism: it produces dUMP, the immediate precursor of thymidine nucleotides and it decreases the intracellular concentration of dUTP so that uracil cannot be incorporated into DNA. The chain is Deoxyuridine 5'-triphosphate nucleotidohydrolase from Chlamydia muridarum (strain MoPn / Nigg).